We begin with the raw amino-acid sequence, 96 residues long: uncharacterized protein (96 aa).

The protein resides in the mitochondrion. This is an uncharacterized protein from Schizosaccharomyces pombe (strain 972 / ATCC 24843) (Fission yeast).